Reading from the N-terminus, the 440-residue chain is GTPase Obg (440 aa).

Positions 5-163 (STFVDQTKIE…RTLRLELKVL (159 aa)) constitute an Obg domain. The OBG-type G domain maps to 164-338 (ADVGLVGFPS…LMSRAADLVS (175 aa)). GTP contacts are provided by residues 170-177 (GFPSVGKS), 195-199 (FTTLK), 217-220 (DLPG), 288-291 (SQMD), and 319-321 (SSV). Positions 177 and 197 each coordinate Mg(2+). Positions 362–440 (YHRPEKMEFT…IGDFSFEFVQ (79 aa)) constitute an OCT domain.

It belongs to the TRAFAC class OBG-HflX-like GTPase superfamily. OBG GTPase family. In terms of assembly, monomer. It depends on Mg(2+) as a cofactor.

The protein resides in the cytoplasm. Its function is as follows. An essential GTPase which binds GTP, GDP and possibly (p)ppGpp with moderate affinity, with high nucleotide exchange rates and a fairly low GTP hydrolysis rate. Plays a role in control of the cell cycle, stress response, ribosome biogenesis and in those bacteria that undergo differentiation, in morphogenesis control. The chain is GTPase Obg from Lactobacillus delbrueckii subsp. bulgaricus (strain ATCC BAA-365 / Lb-18).